Consider the following 425-residue polypeptide: UDP-N-acetylglucosamine 1-carboxyvinyltransferase (425 aa).

24-25 (KN) is a phosphoenolpyruvate binding site. Arginine 95 is a binding site for UDP-N-acetyl-alpha-D-glucosamine. Cysteine 119 (proton donor) is an active-site residue. Cysteine 119 carries the post-translational modification 2-(S-cysteinyl)pyruvic acid O-phosphothioketal. UDP-N-acetyl-alpha-D-glucosamine-binding positions include 124–128 (RPVDQ), aspartate 308, and valine 330.

The protein belongs to the EPSP synthase family. MurA subfamily.

It is found in the cytoplasm. It catalyses the reaction phosphoenolpyruvate + UDP-N-acetyl-alpha-D-glucosamine = UDP-N-acetyl-3-O-(1-carboxyvinyl)-alpha-D-glucosamine + phosphate. It participates in cell wall biogenesis; peptidoglycan biosynthesis. In terms of biological role, cell wall formation. Adds enolpyruvyl to UDP-N-acetylglucosamine. In Deinococcus deserti (strain DSM 17065 / CIP 109153 / LMG 22923 / VCD115), this protein is UDP-N-acetylglucosamine 1-carboxyvinyltransferase.